The primary structure comprises 150 residues: D-aminoacyl-tRNA deacylase (150 aa).

A Gly-cisPro motif, important for rejection of L-amino acids motif is present at residues 136-137 (GP).

It belongs to the DTD family. Homodimer.

Its subcellular location is the cytoplasm. The enzyme catalyses glycyl-tRNA(Ala) + H2O = tRNA(Ala) + glycine + H(+). It catalyses the reaction a D-aminoacyl-tRNA + H2O = a tRNA + a D-alpha-amino acid + H(+). An aminoacyl-tRNA editing enzyme that deacylates mischarged D-aminoacyl-tRNAs. Also deacylates mischarged glycyl-tRNA(Ala), protecting cells against glycine mischarging by AlaRS. Acts via tRNA-based rather than protein-based catalysis; rejects L-amino acids rather than detecting D-amino acids in the active site. By recycling D-aminoacyl-tRNA to D-amino acids and free tRNA molecules, this enzyme counteracts the toxicity associated with the formation of D-aminoacyl-tRNA entities in vivo and helps enforce protein L-homochirality. This chain is D-aminoacyl-tRNA deacylase, found in Staphylococcus aureus (strain MRSA252).